We begin with the raw amino-acid sequence, 276 residues long: ATP synthase subunit a (276 aa).

6 helical membrane-spanning segments follow: residues 47–67 (WHIDSLLFSVGLGVLFLWLFY), 107–127 (IAPLGLTIFVWVFLMNLMDLI), 152–172 (DLNVTLGLALSVFALIVFYSI), 188–208 (PFNHWALIPINFVLETVTLVA), 226–246 (LIFILIALMPWWAQFALSVPW), and 247–267 (AIFHILVIVLQAFIFMMLTIV).

The protein belongs to the ATPase A chain family. In terms of assembly, F-type ATPases have 2 components, CF(1) - the catalytic core - and CF(0) - the membrane proton channel. CF(1) has five subunits: alpha(3), beta(3), gamma(1), delta(1), epsilon(1). CF(0) has three main subunits: a(1), b(2) and c(9-12). The alpha and beta chains form an alternating ring which encloses part of the gamma chain. CF(1) is attached to CF(0) by a central stalk formed by the gamma and epsilon chains, while a peripheral stalk is formed by the delta and b chains.

It is found in the cell inner membrane. Key component of the proton channel; it plays a direct role in the translocation of protons across the membrane. The chain is ATP synthase subunit a from Shewanella pealeana (strain ATCC 700345 / ANG-SQ1).